Reading from the N-terminus, the 325-residue chain is MRILFSADHHIKLGQDKVPKEWQKRRFLMLGERLNDIFHNHNCDLHIAGGDILDVADPSSEEIELLEQFMSRLDHPGKIFTGNHEMLTKTISCLYHYAGVINKVTSGKWEVITKPYRSPEFDIVPYDEIHKAKWKPPVSKLCFTHVRGEIPPHVKPEIDLTKYNCYDTVIAGDLHSYTNSQTIGSTRLLYPGSPLTTSFHRERTKGTNGCFIIDTDTLKVEWIELGDLPQLIRKTIGAGEEMEPSDYDRVVYEVTGDVVQLKSIKDSDLLDKKINHRVTKDAKLNLVDLDMLGELELYFREVEKLSQGDIDRILARAAKYVKDYN.

Could consist of two subunits: D13 and D12.

Possible exonuclease involved in phage DNA recombination, replication, and repair. This Escherichia coli (Enterobacteria phage T5) protein is Probable exonuclease subunit 1 (D12).